The sequence spans 386 residues: Terpene cyclase 6 (386 aa).

Positions 128, 276, and 280 each coordinate Mg(2+). The D(D/E)XX(D/E) motif motif lies at 128–132 (DDEID). An NSE motif motif is present at residues 276 to 284 (NEILSLQKE). The WxxxxxRY motif signature appears at 360 to 367 (WSYNCERY). Residues Arg-366 and Tyr-367 each contribute to the (2E,6E)-farnesyl diphosphate site.

This sequence belongs to the terpene synthase family. In terms of assembly, homodimer. Mg(2+) is required as a cofactor.

The enzyme catalyses (2E,6E)-farnesyl diphosphate + H2O = trichobrasilenol + diphosphate. It carries out the reaction (2E,6E)-farnesyl diphosphate = alpha-humulene + diphosphate. It catalyses the reaction (2E,6E)-farnesyl diphosphate = (-)-(E)-beta-caryophyllene + diphosphate. The catalysed reaction is (2E,6E)-farnesyl diphosphate = (E)-2-epi-beta-caryophyllene + diphosphate. The enzyme catalyses (2E,6E)-farnesyl diphosphate + H2O = (+)-isoafricanol + diphosphate. It carries out the reaction (2E,6E)-farnesyl diphosphate + H2O = (+)-(2S,3R,9R)-pristinol + diphosphate. It catalyses the reaction (2E,6E)-farnesyl diphosphate = african-3-ene + diphosphate. The catalysed reaction is (2E,6E)-farnesyl diphosphate = african-1-ene + diphosphate. It functions in the pathway sesquiterpene biosynthesis. Functionally, terpene cyclase that is able to convert FPP into a mixture of sesquiterpene hydrocarbons and alcohols. The main product is trichobrasilenol. Additionally, side products include alpha-humulene, caryophyllene, 2-epi-caryophyllene, african-3-ene, african-1-ene, isoafricanol and pristinol. Does not accept GPP, GGPP, and GFPP as substrates. The chain is Terpene cyclase 6 from Hypocrea atroviridis (Trichoderma atroviride).